Reading from the N-terminus, the 203-residue chain is Glycerol-3-phosphate acyltransferase (203 aa).

The next 5 membrane-spanning stretches (helical) occupy residues 2–22 (LATLMFILAYLLGSISSAILV), 54–74 (CLVLIFDVLKGTIPVWGAYFL), 80–100 (ALGLVAVAACLGHMFPLFFGF), 114–134 (LPIGLSLAGLLICTWFIMVAI), and 153–173 (TWLIKPLYTLPVTFITVLIIF).

It belongs to the PlsY family. In terms of assembly, probably interacts with PlsX.

It localises to the cell inner membrane. The enzyme catalyses an acyl phosphate + sn-glycerol 3-phosphate = a 1-acyl-sn-glycero-3-phosphate + phosphate. The protein operates within lipid metabolism; phospholipid metabolism. Functionally, catalyzes the transfer of an acyl group from acyl-phosphate (acyl-PO(4)) to glycerol-3-phosphate (G3P) to form lysophosphatidic acid (LPA). This enzyme utilizes acyl-phosphate as fatty acyl donor, but not acyl-CoA or acyl-ACP. The polypeptide is Glycerol-3-phosphate acyltransferase (Pseudoalteromonas translucida (strain TAC 125)).